Here is a 353-residue protein sequence, read N- to C-terminus: uncharacterized protein (353 aa).

It belongs to the MG067/MG068/MG395 family.

This is an uncharacterized protein from Mycoplasma pneumoniae (strain ATCC 29342 / M129 / Subtype 1) (Mycoplasmoides pneumoniae).